A 192-amino-acid chain; its full sequence is Leucine-rich repeat-containing protein 51 (192 aa).

3 LRR repeats span residues 49-71 (SLTQ…NQVA), 80-101 (NLAW…LTTF), and 103-124 (NLSV…NKLA). An LRRCT domain is found at 137–175 (NPMEEEKGYRQYVLCTLSRITTFDFAGVTKADRTTAEVW).

It is found in the cytoplasm. This Pan troglodytes (Chimpanzee) protein is Leucine-rich repeat-containing protein 51.